Here is a 503-residue protein sequence, read N- to C-terminus: Glycerol kinase (503 aa).

Thr12 contacts ADP. ATP-binding residues include Thr12, Thr13, and Ser14. Position 12 (Thr12) interacts with sn-glycerol 3-phosphate. Arg16 serves as a coordination point for ADP. Sn-glycerol 3-phosphate is bound by residues Arg82, Glu83, Tyr134, and Asp243. Positions 82, 83, 134, 243, and 244 each coordinate glycerol. 2 residues coordinate ADP: Thr265 and Gly308. 4 residues coordinate ATP: Thr265, Gly308, Gln312, and Gly412. Gly412 is a binding site for ADP.

Belongs to the FGGY kinase family.

The enzyme catalyses glycerol + ATP = sn-glycerol 3-phosphate + ADP + H(+). Its pathway is polyol metabolism; glycerol degradation via glycerol kinase pathway; sn-glycerol 3-phosphate from glycerol: step 1/1. Inhibited by fructose 1,6-bisphosphate (FBP). Its function is as follows. Key enzyme in the regulation of glycerol uptake and metabolism. Catalyzes the phosphorylation of glycerol to yield sn-glycerol 3-phosphate. The polypeptide is Glycerol kinase (Nitrobacter hamburgensis (strain DSM 10229 / NCIMB 13809 / X14)).